The following is a 384-amino-acid chain: uncharacterized protein (384 aa).

The next 10 membrane-spanning stretches (helical) occupy residues 11–31 (LWFIAISAAGGFILSLTGISI), 33–53 (WMIGTLIVACCLAMIRPAWLM), 66–86 (LALGQMILGIELGQKLNLSVL), 94–114 (FSVGVMLILSILLAMLSGYVL), 153–173 (LVQMMRVLLVVLSIPFLVILI), 197–217 (LAPVLWTVILILAAWGACKAA), 224–244 (APWLLGSMLGVAIVHVGGAAV), 284–304 (IIIVGFVSSVGLIAAMFLSAV), 309–329 (LTGISLITSVLAFAPGGIAEM), and 342–362 (FVVAVQVIRVILVIALLPPFY).

It belongs to the AbrB family.

The protein resides in the cell membrane. This is an uncharacterized protein from Bacillus subtilis (strain 168).